A 140-amino-acid polypeptide reads, in one-letter code: Large-conductance mechanosensitive channel 2 (140 aa).

3 consecutive transmembrane segments (helical) span residues 8-28 (FISKGNVMDLAVGVIIGAAFG), 30-50 (IVDSLVNDIIMPVIGAIFGGL), and 81-101 (GSFITVALNFVILAFIIFLMV).

This sequence belongs to the MscL family. Homopentamer.

The protein localises to the cell inner membrane. Its function is as follows. Channel that opens in response to stretch forces in the membrane lipid bilayer. May participate in the regulation of osmotic pressure changes within the cell. The chain is Large-conductance mechanosensitive channel 2 from Mesorhizobium japonicum (strain LMG 29417 / CECT 9101 / MAFF 303099) (Mesorhizobium loti (strain MAFF 303099)).